The following is a 390-amino-acid chain: Cathepsin D (390 aa).

A propeptide spans V1–Q44 (activation peptide). The Peptidase A1 domain occupies Y59–A385. Cystine bridges form between C71–C140 and C90–C97. The active site involves D77. 2 N-linked (GlcNAc...) asparagine glycosylation sites follow: N114 and N241. An intrachain disulfide couples C264 to C268. D273 is an active-site residue. An intrachain disulfide couples C307 to C344.

This sequence belongs to the peptidase A1 family. Consists of a light chain and a heavy chain. Interacts with ADAM30; this leads to activation of CTSD. Interacts with GRN; stabilizes CTSD; increases its proteolytic activity. In terms of processing, N- and O-glycosylated. Undergoes proteolytic cleavage and activation by ADAM30.

The protein localises to the lysosome. Its subcellular location is the melanosome. It localises to the secreted. The protein resides in the extracellular space. The catalysed reaction is Specificity similar to, but narrower than, that of pepsin A. Does not cleave the 4-Gln-|-His-5 bond in B chain of insulin.. Acid protease active in intracellular protein breakdown. Plays a role in APP processing following cleavage and activation by ADAM30 which leads to APP degradation. The protein is Cathepsin D (CTSD) of Bos taurus (Bovine).